Reading from the N-terminus, the 309-residue chain is Taste receptor type 2 member 64 (309 aa).

The Extracellular portion of the chain corresponds to 1 to 3 (MVY). A helical membrane pass occupies residues 4–26 (FLLIILSILVVFAFVLGNFSNGF). Topologically, residues 27–46 (VALVNVIDWVKTRKISSADQ) are cytoplasmic. A helical membrane pass occupies residues 47–69 (ILTALVVSRIGLLWVILFHWYAN). The Extracellular portion of the chain corresponds to 70–83 (VFNSALYSSEVGAV). Residues 84–106 (ASNISAIINHFSIWLAASLGIFY) form a helical membrane-spanning segment. The Cytoplasmic portion of the chain corresponds to 107–126 (LLKIANFSNLIFLHLKKRIR). Residues 127 to 149 (SVVLVILLGPLVFLICNLAVITM) form a helical membrane-spanning segment. Over 150 to 176 (DERVWTKEYEGNVTWKIKLRNAIHLSD) the chain is Extracellular. N-linked (GlcNAc...) asparagine glycosylation occurs at Asn161. A helical transmembrane segment spans residues 177-199 (LTVSTLANLIPFILTLICFLLLI). The Cytoplasmic segment spans residues 200 to 230 (CSLHKHLKKMQLHGKGSQDLSTKVHIKALQT). Residues 231–253 (VISFLMLYAIYFLYLITLTWNLW) form a helical membrane-spanning segment. At 254 to 258 (TQQNK) the chain is on the extracellular side. A helical membrane pass occupies residues 259–281 (LVFLLCQTLGIMYPSFHSFFLIM). The Cytoplasmic portion of the chain corresponds to 282-309 (GSRKLKQTFLSVLCQVTCLVKGQQPSTP).

Belongs to the G-protein coupled receptor T2R family.

The protein resides in the membrane. Functionally, receptor that may play a role in the perception of bitterness and is gustducin-linked. May play a role in sensing the chemical composition of the gastrointestinal content. The activity of this receptor may stimulate alpha gustducin, mediate PLC-beta-2 activation and lead to the gating of TRPM5. The sequence is that of Taste receptor type 2 member 64 (TAS2R64) from Pan paniscus (Pygmy chimpanzee).